A 615-amino-acid chain; its full sequence is uncharacterized protein (615 aa).

3 stretches are compositionally biased toward polar residues: residues 1-11 (MSETSSNSPAS), 41-55 (LSQN…SSKV), and 128-140 (TSGS…NAPP). Disordered stretches follow at residues 1–61 (MSET…QALV) and 97–149 (HQNH…KASS). Phosphoserine occurs at positions 149 and 152. The disordered stretch occupies residues 181 to 217 (LIHPEQTDRGLPYAPDEKFHNSGSLKLPKGASLEDLS). Phosphoserine occurs at positions 219 and 275. Disordered regions lie at residues 266–481 (KPLA…KFTG), 493–565 (RLQK…KPSF), and 586–615 (GVET…TEEQ). The segment covering 272–283 (RQRSTADLTESD) has biased composition (polar residues). 2 positions are modified to phosphothreonine: T276 and T297. The span at 312-323 (EAEKGFYTKDGE) shows a compositional bias: basic and acidic residues. Residues 356 to 376 (PSLSSASQPSAASSSSSSEPS) are compositionally biased toward low complexity. The segment covering 505–522 (PNKSKSPSGTKSPASGET) has biased composition (polar residues). Position 514 is a phosphothreonine (T514). Phosphoserine is present on S516. Basic and acidic residues predominate over residues 586–599 (GVETRKEVEPKEEA). The span at 600–615 (VIPEEDVEVEVETEEQ) shows a compositional bias: acidic residues.

This is an uncharacterized protein from Schizosaccharomyces pombe (strain 972 / ATCC 24843) (Fission yeast).